The following is a 322-amino-acid chain: Tropinone reductase homolog At2g29260, chloroplastic (322 aa).

Residues Met-1 to Thr-61 constitute a chloroplast transit peptide. Leu-74–His-98 serves as a coordination point for NADP(+). Ser-207 is a substrate binding site.

This sequence belongs to the short-chain dehydrogenases/reductases (SDR) family. SDR65C subfamily.

The protein localises to the plastid. The protein resides in the chloroplast. This chain is Tropinone reductase homolog At2g29260, chloroplastic, found in Arabidopsis thaliana (Mouse-ear cress).